Reading from the N-terminus, the 389-residue chain is Lipid-A-disaccharide synthase (389 aa).

Belongs to the LpxB family.

It carries out the reaction a lipid X + a UDP-2-N,3-O-bis[(3R)-3-hydroxyacyl]-alpha-D-glucosamine = a lipid A disaccharide + UDP + H(+). The protein operates within bacterial outer membrane biogenesis; LPS lipid A biosynthesis. Its function is as follows. Condensation of UDP-2,3-diacylglucosamine and 2,3-diacylglucosamine-1-phosphate to form lipid A disaccharide, a precursor of lipid A, a phosphorylated glycolipid that anchors the lipopolysaccharide to the outer membrane of the cell. The sequence is that of Lipid-A-disaccharide synthase from Burkholderia cenocepacia (strain HI2424).